The sequence spans 430 residues: Enolase (430 aa).

Q167 lines the (2R)-2-phosphoglycerate pocket. E209 acts as the Proton donor in catalysis. Mg(2+) is bound by residues D245, E286, and D313. Residues K338, R367, S368, and K389 each contribute to the (2R)-2-phosphoglycerate site. The active-site Proton acceptor is the K338.

It belongs to the enolase family. The cofactor is Mg(2+).

It is found in the cytoplasm. The protein resides in the secreted. The protein localises to the cell surface. It catalyses the reaction (2R)-2-phosphoglycerate = phosphoenolpyruvate + H2O. It participates in carbohydrate degradation; glycolysis; pyruvate from D-glyceraldehyde 3-phosphate: step 4/5. Functionally, catalyzes the reversible conversion of 2-phosphoglycerate (2-PG) into phosphoenolpyruvate (PEP). It is essential for the degradation of carbohydrates via glycolysis. The sequence is that of Enolase from Synechococcus sp. (strain WH7803).